We begin with the raw amino-acid sequence, 480 residues long: UDP-glycosyltransferase 72B2 (480 aa).

Residues Ser277, 347 to 349, 364 to 372, and 386 to 389 contribute to the UDP-alpha-D-glucose site; these read APQ, HCGWNSTLE, and FAEQ.

It belongs to the UDP-glycosyltransferase family.

This is UDP-glycosyltransferase 72B2 (UGT72B2) from Arabidopsis thaliana (Mouse-ear cress).